Consider the following 255-residue polypeptide: Small ribosomal subunit protein eS1 (255 aa).

The segment covering 1–18 (MAVGKNKRLSKGKKGLKK) has biased composition (basic residues). The interval 1–28 (MAVGKNKRLSKGKKGLKKRTQDPFSRKD) is disordered. Position 2 is an N-acetylalanine; partial (Ala-2). Residues 19–28 (RTQDPFSRKD) are compositionally biased toward basic and acidic residues.

Belongs to the eukaryotic ribosomal protein eS1 family. In terms of assembly, component of the small ribosomal subunit. Mature ribosomes consist of a small (40S) and a large (60S) subunit. The 40S subunit contains about 33 different proteins and 1 molecule of RNA (18S). The 60S subunit contains about 49 different proteins and 3 molecules of RNA (25S, 5.8S and 5S).

The protein localises to the cytoplasm. This is Small ribosomal subunit protein eS1 from Paracoccidioides lutzii (strain ATCC MYA-826 / Pb01) (Paracoccidioides brasiliensis).